We begin with the raw amino-acid sequence, 542 residues long: ABC transport system permease protein p69 (542 aa).

A run of 12 helical transmembrane segments spans residues 23 to 43 (ALAI…FSGF), 77 to 97 (IFYV…FSYL), 114 to 134 (FTIF…NNLF), 140 to 160 (ATLT…TAFF), 212 to 232 (LSIA…GGTV), 236 to 256 (LVLI…ASVF), 287 to 307 (VMIY…LVQL), 350 to 370 (TQAI…GFLA), 386 to 406 (LLVI…PIIF), 412 to 432 (IIFV…TINF), 481 to 501 (LVVF…NFFE), and 509 to 529 (GTIT…LMAV). The ABC transmembrane type-1 domain occupies 349-526 (TTQAISLITL…VYLMVFEVIL (178 aa)).

It belongs to the binding-protein-dependent transport system permease family.

Its subcellular location is the cell membrane. Functionally, probably part of a high-affinity transport system. The polypeptide is ABC transport system permease protein p69 (p69) (Mycoplasma pneumoniae (strain ATCC 29342 / M129 / Subtype 1) (Mycoplasmoides pneumoniae)).